A 454-amino-acid polypeptide reads, in one-letter code: Response regulator PleD (454 aa).

2 Response regulatory domains span residues 4–120 and 155–269; these read RILV…RSLT and RVLI…KTQI. Mg(2+) contacts are provided by D9, D10, D53, and M55. The residue at position 53 (D53) is a 4-aspartylphosphate. Positions 319 to 454 constitute a GGDEF domain; it reads DPVSALLIDI…GRNAVVGKAA (136 aa). 2 residues coordinate substrate: N335 and D344. The active-site Proton acceptor is the E370.

In terms of assembly, homodimer. Inactive monomer in solution. In terms of processing, phosphorylated by PleC and DivJ. Phosphorylation stimulates cyclase activity.

The protein resides in the cytoplasm. It carries out the reaction 2 GTP = 3',3'-c-di-GMP + 2 diphosphate. Its pathway is purine metabolism; 3',5'-cyclic di-GMP biosynthesis. Its activity is regulated as follows. Allosterically inhibited by the product c-di-GMP. Response regulator that is part of a signal transduction pathway controlling cell differentiation in the swarmer-to-stalked cell transition. Its function is as follows. Catalyzes the condensation of two GTP molecules to the cyclic dinucleotide di-GMP (c-di-GMP), which acts as a secondary messenger. This chain is Response regulator PleD (pleD), found in Caulobacter vibrioides (strain ATCC 19089 / CIP 103742 / CB 15) (Caulobacter crescentus).